Here is a 136-residue protein sequence, read N- to C-terminus: Nucleoside diphosphate kinase (136 aa).

Lys10, Phe58, Arg86, Thr92, Arg104, and Asn114 together coordinate ATP. The Pros-phosphohistidine intermediate role is filled by His117.

It belongs to the NDK family. Homotetramer. It depends on Mg(2+) as a cofactor.

Its subcellular location is the cytoplasm. It catalyses the reaction a 2'-deoxyribonucleoside 5'-diphosphate + ATP = a 2'-deoxyribonucleoside 5'-triphosphate + ADP. The catalysed reaction is a ribonucleoside 5'-diphosphate + ATP = a ribonucleoside 5'-triphosphate + ADP. Major role in the synthesis of nucleoside triphosphates other than ATP. The ATP gamma phosphate is transferred to the NDP beta phosphate via a ping-pong mechanism, using a phosphorylated active-site intermediate. This Corynebacterium jeikeium (strain K411) protein is Nucleoside diphosphate kinase.